The following is a 211-amino-acid chain: 3-demethoxyubiquinol 3-hydroxylase (211 aa).

6 residues coordinate Fe cation: E60, E90, H93, E142, E174, and H177.

The protein belongs to the COQ7 family. Fe cation is required as a cofactor.

Its subcellular location is the cell membrane. It catalyses the reaction a 5-methoxy-2-methyl-3-(all-trans-polyprenyl)benzene-1,4-diol + AH2 + O2 = a 3-demethylubiquinol + A + H2O. It participates in cofactor biosynthesis; ubiquinone biosynthesis. Catalyzes the hydroxylation of 2-nonaprenyl-3-methyl-6-methoxy-1,4-benzoquinol during ubiquinone biosynthesis. This Francisella tularensis subsp. tularensis (strain FSC 198) protein is 3-demethoxyubiquinol 3-hydroxylase.